The chain runs to 193 residues: Putative zinc finger protein 726P1 (193 aa).

Residues 18–40 (YKCKKCGKTFNWSSILTNNKKIH) form a C2H2-type 1; degenerate zinc finger. Residues 46–68 (YKCEECGKAFKQHSTLTTHKIIC) form a C2H2-type 2; atypical zinc finger. The C2H2-type 3; degenerate zinc finger occupies 74–96 (YRCEECGKAFCQPSTLTRYKRMH). The segment at 102-124 (YKCEECGKAFTQFSTLTKHKRIH) adopts a C2H2-type 4 zinc-finger fold. The C2H2-type 5; degenerate zinc-finger motif lies at 130–152 (YKCEESGKAFIWSSGLTEHRRVH). The C2H2-type 6 zinc finger occupies 158 to 180 (YKCEECGKALIQFSTLTRHKRIH).

This is Putative zinc finger protein 726P1 (ZNF726P1) from Homo sapiens (Human).